We begin with the raw amino-acid sequence, 313 residues long: Methionyl-tRNA formyltransferase (313 aa).

Residue 112–115 (SLLP) coordinates (6S)-5,6,7,8-tetrahydrofolate.

It belongs to the Fmt family.

The enzyme catalyses L-methionyl-tRNA(fMet) + (6R)-10-formyltetrahydrofolate = N-formyl-L-methionyl-tRNA(fMet) + (6S)-5,6,7,8-tetrahydrofolate + H(+). Attaches a formyl group to the free amino group of methionyl-tRNA(fMet). The formyl group appears to play a dual role in the initiator identity of N-formylmethionyl-tRNA by promoting its recognition by IF2 and preventing the misappropriation of this tRNA by the elongation apparatus. This Geotalea uraniireducens (strain Rf4) (Geobacter uraniireducens) protein is Methionyl-tRNA formyltransferase.